Reading from the N-terminus, the 83-residue chain is U-actitoxin-Aeq6b (83 aa).

An N-terminal signal peptide occupies residues 1-20 (MIYKAVFVCLVLVLLGDVFC). The propeptide occupies 21–36 (SPRNSGGGTLNDNPFE). P82 is subject to Proline amide.

Post-translationally, contains 3 disulfide bonds. In terms of tissue distribution, expressed by acrorhagi.

It is found in the secreted. The protein resides in the nematocyst. Functionally, toxin. This Actinia equina (Beadlet anemone) protein is U-actitoxin-Aeq6b.